The primary structure comprises 127 residues: UPF0325 protein VS_2356 (127 aa).

Belongs to the UPF0325 family.

In Vibrio atlanticus (strain LGP32) (Vibrio splendidus (strain Mel32)), this protein is UPF0325 protein VS_2356.